Reading from the N-terminus, the 344-residue chain is Heat-inducible transcription repressor HrcA (344 aa).

It belongs to the HrcA family.

Its function is as follows. Negative regulator of class I heat shock genes (grpE-dnaK-dnaJ and groELS operons). Prevents heat-shock induction of these operons. This chain is Heat-inducible transcription repressor HrcA, found in Geobacillus sp. (strain WCH70).